A 149-amino-acid polypeptide reads, in one-letter code: MSNESNDLEKNISHLDPTGVDNAYIPPEQPETKHSRFNIDRDTLRNHFIAAVGEFCGTFMFLWCAYVICNVANHDVALTTEPEGSHPGQLIMIALGFGFSVMFSIWCFWWGFEPSRFSLFVFGQSHLTSQMCSDVVSSDHCWDGCWWCR.

The segment at 1–35 is disordered; sequence MSNESNDLEKNISHLDPTGVDNAYIPPEQPETKHS. Residues 1–47 lie on the Cytoplasmic side of the membrane; it reads MSNESNDLEKNISHLDPTGVDNAYIPPEQPETKHSRFNIDRDTLRNH. The chain crosses the membrane as a helical span at residues 48-68; that stretch reads FIAAVGEFCGTFMFLWCAYVI. The Extracellular portion of the chain corresponds to 69–89; it reads CNVANHDVALTTEPEGSHPGQ. The helical transmembrane segment at 90 to 110 threads the bilayer; that stretch reads LIMIALGFGFSVMFSIWCFWW. Topologically, residues 111–149 are cytoplasmic; the sequence is GFEPSRFSLFVFGQSHLTSQMCSDVVSSDHCWDGCWWCR.

The protein belongs to the MIP/aquaporin (TC 1.A.8) family.

It is found in the endoplasmic reticulum membrane. It localises to the cell membrane. Water channel required to facilitate the transport of water across membranes. Involved in freeze tolerance, osmotolerance and cell flocculation in liquid cultures. Is non-functional in most laboratory strains. This Saccharomyces cerevisiae (strain JAY291) (Baker's yeast) protein is Aquaporin-like protein 2 (AQY2-2).